We begin with the raw amino-acid sequence, 522 residues long: Maturase K (522 aa).

This sequence belongs to the intron maturase 2 family. MatK subfamily.

Its subcellular location is the plastid. It localises to the chloroplast. Its function is as follows. Usually encoded in the trnK tRNA gene intron. Probably assists in splicing its own and other chloroplast group II introns. The protein is Maturase K of Micranthus junceus (Micranthus plantagineus var. junceus).